The following is a 950-amino-acid chain: Coatomer subunit beta-2 (950 aa).

HEAT repeat units lie at residues 92–126, 127–164, 275–312, 313–350, and 392–429; these read PEMI…LSEP, EVLE…LPHG, TAVR…TSHR, DVMV…ARNV, and EVAG…TNPK.

As to quaternary structure, oligomeric complex that consists of at least the alpha, beta, beta', gamma, delta, epsilon and zeta subunits.

The protein resides in the cytoplasm. Its subcellular location is the golgi apparatus membrane. It is found in the cytoplasmic vesicle. The protein localises to the COPI-coated vesicle membrane. In terms of biological role, the coatomer is a cytosolic protein complex that binds to dilysine motifs and reversibly associates with Golgi non-clathrin-coated vesicles, which further mediate biosynthetic protein transport from the ER, via the Golgi up to the trans Golgi network. Coatomer complex is required for budding from Golgi membranes, and is essential for the retrograde Golgi-to-ER transport of dilysine-tagged proteins. This Oryza sativa subsp. japonica (Rice) protein is Coatomer subunit beta-2.